Here is an 842-residue protein sequence, read N- to C-terminus: Oxysterol-binding protein-related protein 7 (842 aa).

Positions 1 to 28 (MDFQERDPPFLPESAQSSKPSSAQQASE) are disordered. Over residues 14-27 (SAQSSKPSSAQQAS) the composition is skewed to low complexity. In terms of domain architecture, PH spans 47–142 (PERQEGHLLK…WVAQLRAHRL (96 aa)). Residue T171 is modified to Phosphothreonine. 4 positions are modified to phosphoserine: S217, S226, S256, and S272. A disordered region spans residues 330–369 (DMHQGSELSRMGVSEASTGQRRLHSLSTSSDTTADSFSSL). A compositionally biased stretch (low complexity) spans 354-369 (SLSTSSDTTADSFSSL).

It belongs to the OSBP family. As to expression, expressed in epithelium of small and large intestines (at protein level). Expressed in stomach, duodenum, jejunum, ascending colon, spleen, thymus, lymph node, trachea and leukocytes.

It is found in the cytoplasm. It localises to the cytosol. The protein localises to the endoplasmic reticulum membrane. The protein resides in the cell membrane. This is Oxysterol-binding protein-related protein 7 (OSBPL7) from Homo sapiens (Human).